A 294-amino-acid chain; its full sequence is 4-hydroxy-tetrahydrodipicolinate synthase (294 aa).

Thr-45 is a pyruvate binding site. The Proton donor/acceptor role is filled by Tyr-133. Residue Lys-161 is the Schiff-base intermediate with substrate of the active site. Ile-203 serves as a coordination point for pyruvate.

Belongs to the DapA family. Homotetramer; dimer of dimers.

The protein localises to the cytoplasm. The catalysed reaction is L-aspartate 4-semialdehyde + pyruvate = (2S,4S)-4-hydroxy-2,3,4,5-tetrahydrodipicolinate + H2O + H(+). Its pathway is amino-acid biosynthesis; L-lysine biosynthesis via DAP pathway; (S)-tetrahydrodipicolinate from L-aspartate: step 3/4. In terms of biological role, catalyzes the condensation of (S)-aspartate-beta-semialdehyde [(S)-ASA] and pyruvate to 4-hydroxy-tetrahydrodipicolinate (HTPA). The polypeptide is 4-hydroxy-tetrahydrodipicolinate synthase (Shewanella sp. (strain MR-7)).